A 132-amino-acid chain; its full sequence is Small ribosomal subunit protein uS8c (132 aa).

The protein belongs to the universal ribosomal protein uS8 family. Part of the 30S ribosomal subunit.

The protein resides in the plastid. It localises to the chloroplast. Its function is as follows. One of the primary rRNA binding proteins, it binds directly to 16S rRNA central domain where it helps coordinate assembly of the platform of the 30S subunit. The polypeptide is Small ribosomal subunit protein uS8c (rps8) (Acorus calamus (Sweet flag)).